Consider the following 570-residue polypeptide: Methyl-coenzyme M reductase subunit alpha (570 aa).

Gln-161 serves as a coordination point for coenzyme F430. Residues Arg-239, 270–271, and Arg-284 contribute to the coenzyme B site; that span reads KH. Position 271 is a pros-methylhistidine (His-271). 5-methylarginine is present on Arg-285. The coenzyme M site is built by Tyr-346 and Phe-464. At Gly-465 the chain carries 1-thioglycine. Residue Asp-470 is modified to (Z)-2,3-didehydroaspartate. An S-methylcysteine modification is found at Cys-472.

The protein belongs to the methyl-coenzyme M reductase alpha subunit family. As to quaternary structure, MCR is a hexamer of two alpha, two beta, and two gamma chains, forming a dimer of heterotrimers. Coenzyme F430 serves as cofactor. In terms of processing, the alpha subunit contains five modified amino acids near the active site region. Is methylated on His-271, Arg-285 and Cys-472, probably by the action of specific S-adenosylmethionine-dependent methyltransferases. Also contains a thioglycine at position 465, forming a thiopeptide bond. Contains a didehydroaspartate residue at position 470. The methylation on C5 of Arg-285 is a post-translational methylation not essential in vivo, but which plays a role for the stability and structural integrity of MCR. Does not show a methylation at Gln-420, as shown for M.marburgensis.

The protein localises to the cytoplasm. It catalyses the reaction coenzyme B + methyl-coenzyme M = methane + coenzyme M-coenzyme B heterodisulfide. It functions in the pathway one-carbon metabolism; methyl-coenzyme M reduction; methane from methyl-coenzyme M: step 1/1. Component of the methyl-coenzyme M reductase (MCR) I that catalyzes the reductive cleavage of methyl-coenzyme M (CoM-S-CH3 or 2-(methylthio)ethanesulfonate) using coenzyme B (CoB or 7-mercaptoheptanoylthreonine phosphate) as reductant which results in the production of methane and the mixed heterodisulfide of CoB and CoM (CoM-S-S-CoB). This is the final step in methanogenesis. The chain is Methyl-coenzyme M reductase subunit alpha (mcrA) from Methanosarcina barkeri (strain Fusaro / DSM 804).